The following is a 58-amino-acid chain: UPF0391 membrane protein Sputcn32_1322 (58 aa).

A run of 2 helical transmembrane segments spans residues 6 to 26 and 28 to 48; these read LMFLVVAIIAGLFGFTGIAGA and AGIAKIIFFLFIVLLVISLLV.

It belongs to the UPF0391 family.

The protein localises to the cell membrane. The polypeptide is UPF0391 membrane protein Sputcn32_1322 (Shewanella putrefaciens (strain CN-32 / ATCC BAA-453)).